The primary structure comprises 701 residues: Coiled-coil domain-containing protein 62 (701 aa).

Coiled-coil stretches lie at residues 61-197 and 241-342; these read ETST…LQAR and TCVV…QFLN. Residues 624-652 are disordered; sequence KSAEREEESAALPDRRTSANEKDDFSPTS. The segment covering 636–648 has biased composition (basic and acidic residues); that stretch reads PDRRTSANEKDDF. Short sequence motifs (LXXLL motif) lie at residues 654–658 and 670–674; these read LQRLL and LSTLL.

As to quaternary structure, interacts with ESR1 and ESR2 in the presence of estradiol/E2. The interaction with ESR2 recruits CCDC62 to ER target genes, including cyclin-D1/CCND1 AP-1 promoter. Interacts with GOPC. As to expression, highly expressed in testis, not detected in other tissues (at protein level). Expressed at low levels in the epididymis, lung, spleen, bladder, kidney, liver, muscle.

It localises to the cytoplasm. The protein resides in the nucleus. The protein localises to the cytoplasmic vesicle. It is found in the secretory vesicle. Its subcellular location is the acrosome. Functionally, nuclear receptor coactivator that can enhance preferentially estrogen receptors ESR1 and ESR2 transactivation. Also modulates progesterone/PGR, glucocorticoid/NR3C1 and androgen/AR receptors transactivation, although at lower level; little effect on vitamin D receptor/VDR. Required for normal spermiogenesis. It probably plays a role in acrosome formation. This Mus musculus (Mouse) protein is Coiled-coil domain-containing protein 62 (Ccdc62).